The chain runs to 429 residues: Glutamate-1-semialdehyde 2,1-aminomutase 2 (429 aa).

K268 is subject to N6-(pyridoxal phosphate)lysine.

Belongs to the class-III pyridoxal-phosphate-dependent aminotransferase family. HemL subfamily. Homodimer. It depends on pyridoxal 5'-phosphate as a cofactor.

It is found in the cytoplasm. The enzyme catalyses (S)-4-amino-5-oxopentanoate = 5-aminolevulinate. Its pathway is porphyrin-containing compound metabolism; protoporphyrin-IX biosynthesis; 5-aminolevulinate from L-glutamyl-tRNA(Glu): step 2/2. The chain is Glutamate-1-semialdehyde 2,1-aminomutase 2 from Staphylococcus carnosus (strain TM300).